A 224-amino-acid polypeptide reads, in one-letter code: Glutathione S-transferase Mu 5 (224 aa).

One can recognise a GST N-terminal domain in the interval 4–91 (KSMVLGYWDI…YIARKHNMCG (88 aa)). Ser-5 bears the Phosphoserine mark. Glutathione-binding positions include 10–11 (YW), 49–53 (WLDVK), 62–63 (NL), and 75–76 (QS). The GST C-terminal domain maps to 93-211 (TEEEKIRVDI…QSDRFFKMPI (119 aa)). Tyr-119 lines the substrate pocket.

It belongs to the GST superfamily. Mu family. In terms of assembly, homodimer. Interacts with PFKM isoform 2 and isoform 3 (via N-terminal testis-specific region).

Its subcellular location is the cytoplasm. The catalysed reaction is RX + glutathione = an S-substituted glutathione + a halide anion + H(+). In terms of biological role, conjugation of reduced glutathione to a wide number of exogenous and endogenous hydrophobic electrophiles. The chain is Glutathione S-transferase Mu 5 (Gstm5) from Mus musculus (Mouse).